Consider the following 127-residue polypeptide: Egg cell-secreted protein 1.4 (127 aa).

The signal sequence occupies residues 1-25 (MASNTTFLFSTVTLLIILLNTTVSG).

The protein belongs to the plant egg cell-secreted peptide family. Restricted to female reproductive tissues, specifically accumulating in storage vesicles of the unfertilized egg cell.

The protein localises to the cytoplasmic vesicle. It localises to the secreted. Functionally, involved in the regulation of gamete interactions during the double fertilization and to prevent multiple-pollen tube attraction; mediates the redistribution of the gamete fusogen HAP2/GCS1 to the cell surface after secretion upon sperm arrival. This is Egg cell-secreted protein 1.4 (EC1.4) from Arabidopsis thaliana (Mouse-ear cress).